The primary structure comprises 637 residues: Zinc finger protein rsv2 (637 aa).

Disordered stretches follow at residues 1–41 (MDTT…SKMN), 145–164 (SNHQ…PTSA), 169–207 (IITA…QPFS), 221–363 (TGAI…STAL), 404–427 (QDSF…TRSY), and 440–558 (SVNP…GAQR). A compositionally biased stretch (low complexity) spans 172–189 (ANSSPSGNAGSNASASMS). Polar residues predominate over residues 196 to 207 (PSASTINDQPFS). Residues 279 to 296 (SDLKRSLGHNQKSDRVSK) are compositionally biased toward basic and acidic residues. A compositionally biased stretch (polar residues) spans 298 to 344 (VSPQHQANPSTLNNPLKTQNFDSSKNLYTDNKDSSLVSPTGLQSRME). Composition is skewed to basic and acidic residues over residues 345–355 (QNPEVRAHPMK) and 404–413 (QDSFNKESIK). The segment covering 455-471 (VPSNTTISSSPPLTSPV) has biased composition (low complexity). Composition is skewed to polar residues over residues 472 to 498 (KTSA…QSAA) and 508 to 527 (YYNT…QKVS). Residues 544-554 (TTPTNSSTTAT) are compositionally biased toward low complexity. The C2H2-type 1 zinc finger occupies 572 to 603 (VRCTLQNRVTGEICNTVFSRTYDLIRHQDTIH). Residues 610–635 (FRCEICGDQRHFSRHDALVRHLRVKH) form a C2H2-type 2; degenerate zinc finger.

The protein resides in the nucleus. The polypeptide is Zinc finger protein rsv2 (rsv2) (Schizosaccharomyces pombe (strain 972 / ATCC 24843) (Fission yeast)).